The chain runs to 199 residues: Transcriptional regulatory protein EntR (199 aa).

The 122-residue stretch at 3-124 (KILVIDRCHF…TLSHTIQEAL (122 aa)) folds into the Response regulatory domain. D8 carries the post-translational modification 4-aspartylphosphate. The 66-residue stretch at 133-198 (PKNATPLLTP…SPFLSLPGKG (66 aa)) folds into the HTH luxR-type domain. The H-T-H motif DNA-binding region spans 157 to 176 (NNAIAAALSIHGKTVYTYKR).

May serve to repress the entericidin locus in C.freundii. This chain is Transcriptional regulatory protein EntR (ecnR), found in Citrobacter freundii.